A 214-amino-acid polypeptide reads, in one-letter code: Insulin-like growth factor 2 (214 aa).

Positions 48 to 79 (EVASAETLCGGELVDALQFVCEDRGFYFSRPT) are b. 3 cysteine pairs are disulfide-bonded: C56-C97, C68-C110, and C96-C101. The interval 80–90 (SRSNSRRSQNR) is c. An a region spans residues 91–111 (GIVEECCFRSCDLNLLEQYCA). Residues 112 to 117 (KPAKSE) form a d region. A propeptide spans 118-214 (RDVSATSLQI…PPTDNYVSHN (97 aa)) (e peptide).

Belongs to the insulin family.

Its subcellular location is the secreted. In terms of biological role, the insulin-like growth factors, isolated from plasma, are structurally and functionally related to insulin but have a much higher growth-promoting activity. Acts as a ligand for integrin which is required for IGF2 signaling. This chain is Insulin-like growth factor 2, found in Oncorhynchus mykiss (Rainbow trout).